The sequence spans 320 residues: tRNA N6-adenosine threonylcarbamoyltransferase (320 aa).

Residues histidine 114 and histidine 118 each coordinate Fe cation. Residues 136–140 (VVSGG), aspartate 169, glycine 182, aspartate 186, and asparagine 273 each bind substrate. A Fe cation-binding site is contributed by aspartate 297.

Belongs to the KAE1 / TsaD family. The cofactor is Fe(2+).

It localises to the cytoplasm. It catalyses the reaction L-threonylcarbamoyladenylate + adenosine(37) in tRNA = N(6)-L-threonylcarbamoyladenosine(37) in tRNA + AMP + H(+). Functionally, required for the formation of a threonylcarbamoyl group on adenosine at position 37 (t(6)A37) in tRNAs that read codons beginning with adenine. Is involved in the transfer of the threonylcarbamoyl moiety of threonylcarbamoyl-AMP (TC-AMP) to the N6 group of A37, together with TsaE and TsaB. TsaD likely plays a direct catalytic role in this reaction. This chain is tRNA N6-adenosine threonylcarbamoyltransferase, found in Ureaplasma urealyticum serovar 10 (strain ATCC 33699 / Western).